The sequence spans 103 residues: Co-chaperonin GroES (103 aa).

The protein belongs to the GroES chaperonin family. Heptamer of 7 subunits arranged in a ring. Interacts with the chaperonin GroEL.

The protein resides in the cytoplasm. In terms of biological role, together with the chaperonin GroEL, plays an essential role in assisting protein folding. The GroEL-GroES system forms a nano-cage that allows encapsulation of the non-native substrate proteins and provides a physical environment optimized to promote and accelerate protein folding. GroES binds to the apical surface of the GroEL ring, thereby capping the opening of the GroEL channel. This Dinoroseobacter shibae (strain DSM 16493 / NCIMB 14021 / DFL 12) protein is Co-chaperonin GroES.